Reading from the N-terminus, the 304-residue chain is Recombination-associated protein RdgC (304 aa).

Belongs to the RdgC family.

The protein localises to the cytoplasm. Its subcellular location is the nucleoid. May be involved in recombination. The polypeptide is Recombination-associated protein RdgC (Shewanella putrefaciens (strain CN-32 / ATCC BAA-453)).